A 249-amino-acid polypeptide reads, in one-letter code: Tetrahydromethanopterin S-methyltransferase subunit A (249 aa).

Residues 2-225 (PEKAEPAEGW…YMAGYLSGRT (224 aa)) are Cytoplasmic-facing. H88 contributes to the 5-hydroxybenzimidazolylcob(I)amide binding site. Residues 226 to 246 (MGLLIGIISGMIFLFLPMVVL) form a helical membrane-spanning segment. At 247-249 (GGV) the chain is on the extracellular side.

It belongs to the MtrA family. In terms of assembly, the complex is composed of 8 subunits; MtrA, MtrB, MtrC, MtrD, MtrE, MtrF, MtrG and MtrH. Requires 5-hydroxybenzimidazolylcob(I)amide as cofactor.

It localises to the cell membrane. It catalyses the reaction 5-methyl-5,6,7,8-tetrahydromethanopterin + coenzyme M + 2 Na(+)(in) = 5,6,7,8-tetrahydromethanopterin + methyl-coenzyme M + 2 Na(+)(out). It participates in one-carbon metabolism; methanogenesis from CO(2); methyl-coenzyme M from 5,10-methylene-5,6,7,8-tetrahydromethanopterin: step 2/2. In terms of biological role, part of a complex that catalyzes the formation of methyl-coenzyme M and tetrahydromethanopterin from coenzyme M and methyl-tetrahydromethanopterin. This is an energy-conserving, sodium-ion translocating step. The chain is Tetrahydromethanopterin S-methyltransferase subunit A from Methanopyrus kandleri (strain AV19 / DSM 6324 / JCM 9639 / NBRC 100938).